We begin with the raw amino-acid sequence, 388 residues long: Succinate--CoA ligase [ADP-forming] subunit beta (388 aa).

The ATP-grasp domain occupies Lys-9–Lys-245. ATP is bound by residues Lys-46, Gly-53–Gly-55, Glu-100, Tyr-103, and Glu-108. Residues Asn-200 and Asp-214 each coordinate Mg(2+). Substrate is bound by residues Asn-265 and Gly-322–Val-324.

The protein belongs to the succinate/malate CoA ligase beta subunit family. In terms of assembly, heterotetramer of two alpha and two beta subunits. The cofactor is Mg(2+).

The catalysed reaction is succinate + ATP + CoA = succinyl-CoA + ADP + phosphate. It catalyses the reaction GTP + succinate + CoA = succinyl-CoA + GDP + phosphate. It participates in carbohydrate metabolism; tricarboxylic acid cycle; succinate from succinyl-CoA (ligase route): step 1/1. Succinyl-CoA synthetase functions in the citric acid cycle (TCA), coupling the hydrolysis of succinyl-CoA to the synthesis of either ATP or GTP and thus represents the only step of substrate-level phosphorylation in the TCA. The beta subunit provides nucleotide specificity of the enzyme and binds the substrate succinate, while the binding sites for coenzyme A and phosphate are found in the alpha subunit. This Acinetobacter baylyi (strain ATCC 33305 / BD413 / ADP1) protein is Succinate--CoA ligase [ADP-forming] subunit beta.